Consider the following 440-residue polypeptide: L-seryl-tRNA(Sec) selenium transferase (440 aa).

Lys-282 is subject to N6-(pyridoxal phosphate)lysine.

It belongs to the SelA family. Requires pyridoxal 5'-phosphate as cofactor.

It is found in the cytoplasm. The catalysed reaction is L-seryl-tRNA(Sec) + selenophosphate + H(+) = L-selenocysteinyl-tRNA(Sec) + phosphate. It participates in aminoacyl-tRNA biosynthesis; selenocysteinyl-tRNA(Sec) biosynthesis; selenocysteinyl-tRNA(Sec) from L-seryl-tRNA(Sec) (bacterial route): step 1/1. Converts seryl-tRNA(Sec) to selenocysteinyl-tRNA(Sec) required for selenoprotein biosynthesis. The sequence is that of L-seryl-tRNA(Sec) selenium transferase from Campylobacter jejuni (strain RM1221).